Here is a 209-residue protein sequence, read N- to C-terminus: N-acetyltransferase aca1 (209 aa).

Residues 26-202 enclose the N-acetyltransferase domain; the sequence is TNVKNKEELL…DAYIYQYHFP (177 aa). Residue N118 participates in substrate binding. 128–133 serves as a coordination point for CoA; the sequence is RSKGIG. 155–156 contributes to the substrate binding site; that stretch reads NL.

It belongs to the acetyltransferase family. As to quaternary structure, homodimer.

The protein localises to the cytoplasm. Its subcellular location is the mitochondrion. The enzyme catalyses L-glutamate 5-semialdehyde + acetyl-CoA = N-acetyl-L-glutamate 5-semialdehyde + CoA + H(+). Functionally, N-acetyltransferase involved in oxidative stress resistance. Acetylates the toxic proline metabolism intermediate (S)-1-pyrroline-5-carboxylate (P5C), or more likely its spontaneously forming tautomer glutamate-5-semialdehyde (GSA) into N-acetyl-GSA for arginine synthesis in the mitochondria. P5C has been shown to increase the levels of reactive oxygen species (ROS) in the cell by inhibiting the function of the respiratory chain in the mitochondria. The enzyme is able to reduce intracellular ROS levels under P5C-induced oxidative stress and protects cells from damage by oxidative stress. Also acetylates and thereby detoxifies the proline analog azetidine-2-carboxylate (AZC), however it is unlikely that AZC is a natural substrate as it occurs only in plants belonging to the Lilaceae family. The protein is N-acetyltransferase aca1 of Schizosaccharomyces pombe (strain 972 / ATCC 24843) (Fission yeast).